Here is a 221-residue protein sequence, read N- to C-terminus: UPF0502 protein PA14_19450 (221 aa).

Belongs to the UPF0502 family.

The chain is UPF0502 protein PA14_19450 from Pseudomonas aeruginosa (strain UCBPP-PA14).